We begin with the raw amino-acid sequence, 601 residues long: Amino-acid acetyltransferase, mitochondrial (601 aa).

One can recognise an N-acetyltransferase domain in the interval 401 to 558 (FTMDNLIASK…KKKQNNKKKK (158 aa)).

The protein belongs to the acetyltransferase family.

Its subcellular location is the mitochondrion. The catalysed reaction is L-glutamate + acetyl-CoA = N-acetyl-L-glutamate + CoA + H(+). The protein operates within amino-acid biosynthesis; L-arginine biosynthesis; N(2)-acetyl-L-ornithine from L-glutamate: step 1/4. Functionally, N-acetylglutamate synthase involved in arginine biosynthesis. This Lodderomyces elongisporus (strain ATCC 11503 / CBS 2605 / JCM 1781 / NBRC 1676 / NRRL YB-4239) (Yeast) protein is Amino-acid acetyltransferase, mitochondrial (ARG2).